The following is a 149-amino-acid chain: Nucleoside diphosphate kinase (149 aa).

The ATP site is built by lysine 9, phenylalanine 57, arginine 85, threonine 91, arginine 102, and asparagine 112. The active-site Pros-phosphohistidine intermediate is the histidine 115.

This sequence belongs to the NDK family. As to quaternary structure, homotetramer. Requires Mg(2+) as cofactor.

It is found in the cytoplasm. The enzyme catalyses a 2'-deoxyribonucleoside 5'-diphosphate + ATP = a 2'-deoxyribonucleoside 5'-triphosphate + ADP. It carries out the reaction a ribonucleoside 5'-diphosphate + ATP = a ribonucleoside 5'-triphosphate + ADP. In terms of biological role, major role in the synthesis of nucleoside triphosphates other than ATP. The ATP gamma phosphate is transferred to the NDP beta phosphate via a ping-pong mechanism, using a phosphorylated active-site intermediate. This Thermomicrobium roseum (strain ATCC 27502 / DSM 5159 / P-2) protein is Nucleoside diphosphate kinase.